The sequence spans 271 residues: Sulfur carrier protein FdhD (271 aa).

Catalysis depends on C114, which acts as the Cysteine persulfide intermediate.

It belongs to the FdhD family.

The protein resides in the cytoplasm. Required for formate dehydrogenase (FDH) activity. Acts as a sulfur carrier protein that transfers sulfur from IscS to the molybdenum cofactor prior to its insertion into FDH. The polypeptide is Sulfur carrier protein FdhD (Agrobacterium fabrum (strain C58 / ATCC 33970) (Agrobacterium tumefaciens (strain C58))).